Reading from the N-terminus, the 623-residue chain is Low affinity potassium transport system protein Kup (623 aa).

12 helical membrane passes run 10-30 (LSAVTLAAIGVVYGDIGTSPL), 47-67 (PDVVFGFLSLIFWMLILIVSV), 102-122 (ILVILGLIGGSFFYGEVVITP), 138-158 (PALDPYIVPCSIAVLTLLFVI), 166-186 (VGKLFAPVMLVWFLTLALLGL), 214-234 (VSFFALGAVVLAITGVEALYA), 248-268 (WFTVVLPSLVLNYFGQGALLL), 277-297 (PFFLLAPDWALIPLLILATLA), 338-358 (IYIPVINWTLYLAVVLVIVGF), 364-384 (LAAAYGIAVTGTMVITSVLFC), 396-416 (FFVYFLLVALLVIDVPMFSAN), and 420-440 (LFSGGWLPLSLGLVMFIIMTT).

This sequence belongs to the HAK/KUP transporter (TC 2.A.72) family.

The protein localises to the cell inner membrane. It catalyses the reaction K(+)(in) + H(+)(in) = K(+)(out) + H(+)(out). In terms of biological role, responsible for the low-affinity transport of potassium into the cell. Likely operates as a K(+):H(+) symporter. The sequence is that of Low affinity potassium transport system protein Kup from Yersinia enterocolitica serotype O:8 / biotype 1B (strain NCTC 13174 / 8081).